A 619-amino-acid polypeptide reads, in one-letter code: Kininogen-2 (619 aa).

The N-terminal stretch at 1 to 18 (MKLITILFLCSRLLPSLT) is a signal peptide. Pyrrolidone carboxylic acid is present on Gln-19. The 105-residue stretch at 27–131 (CNDQDVFKAV…IQTCLITPAE (105 aa)) folds into the Cystatin kininogen-type 1 domain. Cystine bridges form between Cys-27–Cys-589, Cys-82–Cys-93, Cys-106–Cys-125, Cys-141–Cys-144, Cys-205–Cys-217, Cys-228–Cys-247, Cys-261–Cys-264, Cys-325–Cys-337, and Cys-348–Cys-367. Asn-87 carries an N-linked (GlcNAc...) asparagine glycan. O-linked (GalNAc...) threonine; partial glycosylation is present at Thr-136. The Cystatin kininogen-type 2 domain maps to 150–253 (TKSPDLEPVL…SQKCDLYPGE (104 aa)). 2 N-linked (GlcNAc...) asparagine glycosylation sites follow: Asn-168 and Asn-169. Residue Asn-197 is glycosylated (N-linked (GlcNAc...) asparagine; partial). Asn-204 carries N-linked (GlcNAc...) asparagine glycosylation. The Cystatin kininogen-type 3 domain maps to 270-373 (VDSPDLEEAL…TVNCQPLGQT (104 aa)). The N-linked (GlcNAc...) asparagine glycan is linked to Asn-280. Pro-380 is modified (4-hydroxyproline). The tract at residues 394 to 495 (EGSTTVSLPH…GKNNGKHYDW (102 aa)) is disordered. Ser-396 is a glycosylation site (O-linked (GalNAc...) serine). Thr-397 and Thr-398 each carry an O-linked (GalNAc...) threonine glycan. Residues Ser-400 and Ser-404 are each glycosylated (O-linked (GalNAc...) serine). Positions 442–490 (GHKHKHDQGHGHHRSHGLGHGHQKQHGLGHGHKHGHGHGKHKNKGKNNG) are enriched in basic residues. The O-linked (GalNAc...) serine glycan is linked to Ser-510. O-linked (GalNAc...) threonine glycosylation is found at Thr-518, Thr-522, Thr-534, Thr-546, Thr-551, and Thr-568.

In terms of processing, bradykinin is released from kininogen by plasma kallikrein. Plasma.

Its subcellular location is the secreted. The protein resides in the extracellular space. In terms of biological role, (1) Kininogens are inhibitors of thiol proteases; (2) HMW-kininogen plays an important role in blood coagulation by helping to position optimally prekallikrein and factor XI next to factor XII; (3) HMW-kininogen inhibits the thrombin- and plasmin-induced aggregation of thrombocytes; (4) the active peptide bradykinin that is released from HMW-kininogen shows a variety of physiological effects: (4A) influence in smooth muscle contraction, (4B) induction of hypotension, (4C) natriuresis and diuresis, (4D) decrease in blood glucose level, (4E) it is a mediator of inflammation and causes (4E1) increase in vascular permeability, (4E2) stimulation of nociceptors (4E3) release of other mediators of inflammation (e.g. prostaglandins), (4F) it has a cardioprotective effect (directly via bradykinin action, indirectly via endothelium-derived relaxing factor action); (5) LMW-kininogen inhibits the aggregation of thrombocytes; (6) LMW-kininogen is in contrast to HMW-kininogen not involved in blood clotting. The sequence is that of Kininogen-2 (KNG2) from Bos taurus (Bovine).